The chain runs to 378 residues: D-alanine--D-alanine ligase (378 aa).

In terms of domain architecture, ATP-grasp spans 141–347 (KKLLTLNGIR…YSELIDQLIQ (207 aa)). An ATP-binding site is contributed by 171 to 226 (AEELGETLFVKPARQGSSVGIHKVRNEEEYNAALEDGFKYDYKILVEEAIKNPREV). 3 residues coordinate Mg(2+): D301, E314, and N316.

Belongs to the D-alanine--D-alanine ligase family. It depends on Mg(2+) as a cofactor. Requires Mn(2+) as cofactor.

It is found in the cytoplasm. The catalysed reaction is 2 D-alanine + ATP = D-alanyl-D-alanine + ADP + phosphate + H(+). It participates in cell wall biogenesis; peptidoglycan biosynthesis. In terms of biological role, cell wall formation. The protein is D-alanine--D-alanine ligase of Ligilactobacillus salivarius (strain UCC118) (Lactobacillus salivarius).